The primary structure comprises 361 residues: G-protein coupled receptor 68 (361 aa).

The Extracellular portion of the chain corresponds to methionine 1–asparagine 12. N-linked (GlcNAc...) asparagine glycans are attached at residues asparagine 3 and asparagine 8. A helical membrane pass occupies residues cysteine 13–glutamine 49. Disulfide bonds link cysteine 13–cysteine 258 and cysteine 94–cysteine 172. Residues isoleucine 50–arginine 53 are Cytoplasmic-facing. Residues asparagine 54 to histidine 84 traverse the membrane as a helical segment. Topologically, residues aspartate 85–histidine 89 are extracellular. Residues aspartate 90–histidine 125 form a helical membrane-spanning segment. Topologically, residues proline 126–arginine 133 are cytoplasmic. The chain crosses the membrane as a helical span at residues threonine 134–glutamate 160. Residues glutamate 161–tyrosine 176 are Extracellular-facing. Positions glutamate 161–tyrosine 176 are extracellular loop 2 (ECL2). A helical transmembrane segment spans residues proline 177–arginine 214. Residues serine 215–threonine 218 lie on the Cytoplasmic side of the membrane. A helical membrane pass occupies residues glutamine 219–tryptophan 254. Residues glutamate 255 to phenylalanine 260 lie on the Extracellular side of the membrane. The chain crosses the membrane as a helical span at residues alanine 261–valine 289. The Cytoplasmic portion of the chain corresponds to serine 290–serine 361. Residues leucine 340–serine 361 are disordered. Residues glycine 351–serine 361 are compositionally biased toward gly residues.

The protein belongs to the G-protein coupled receptor 1 family.

The protein resides in the cell membrane. With respect to regulation, activated by a network of residues that connects an extracellular-facing cavity to Glu-149, a conserved charged residue buried in the transmembrane core of the receptor. Protonation likely drives conformational changes in extracellular loop 2 (ECL2), which stabilizes movement of transmembrane 3 (TM3) and a series of rearrangements that connect the extracellular-facing cavity to Glu-149, a residue only conserved in proton-sensing G-protein coupled receptors. Activated in an allosteric manner by divalent metal ions at the extracellular surface following the order: Cd(2+) &gt; Co(2+) &gt; Ni(2+) &gt; Zn(2+) &gt; Fe(2+) &gt; Ca(2+) &gt; Mg(2+). Functionally, proton-sensing G-protein coupled receptor activated by extracellular pH, which is required to monitor pH changes and generate adaptive reactions. The receptor is almost silent at pH 7.8 but fully activated at pH 6.8. Ligand binding causes a conformation change that triggers signaling via guanine nucleotide-binding proteins (G proteins) and modulates the activity of downstream effectors, such as phospholipase C. GPR68 is mainly coupled to G(q) G proteins and mediates production of diacylglycerol (DAG) and inositol 1,4,5-trisphosphate (IP3). Acts as a key mechanosensor of fluid shear stress and membrane stretch. Expressed in endothelial cells of small-diameter resistance arteries, where it mediates flow-induced dilation in response to shear stress. May represents an osteoblastic pH sensor regulating cell-mediated responses to acidosis in bone. Acts as a regulator of calcium-sensing receptor CASR in a seesaw manner: GPR68-mediated signaling inhibits CASR signaling in response to protons, while CASR inhibits GPR68 in presence of extracellular calcium. This chain is G-protein coupled receptor 68 (GPR68), found in Bos taurus (Bovine).